The primary structure comprises 423 residues: Glucose-1-phosphate adenylyltransferase (423 aa).

Alpha-D-glucose 1-phosphate-binding positions include Tyr110, Gly175, 190 to 191, and Ser208; that span reads EK.

This sequence belongs to the bacterial/plant glucose-1-phosphate adenylyltransferase family. Homotetramer.

The enzyme catalyses alpha-D-glucose 1-phosphate + ATP + H(+) = ADP-alpha-D-glucose + diphosphate. It participates in glycan biosynthesis; glycogen biosynthesis. In terms of biological role, involved in the biosynthesis of ADP-glucose, a building block required for the elongation reactions to produce glycogen. Catalyzes the reaction between ATP and alpha-D-glucose 1-phosphate (G1P) to produce pyrophosphate and ADP-Glc. The protein is Glucose-1-phosphate adenylyltransferase of Nitrosococcus oceani (strain ATCC 19707 / BCRC 17464 / JCM 30415 / NCIMB 11848 / C-107).